We begin with the raw amino-acid sequence, 396 residues long: Elongation factor Tu (396 aa).

One can recognise a tr-type G domain in the interval 10-206 (KPHVNVGTIG…VLDTYIPEPE (197 aa)). The G1 stretch occupies residues 19–26 (GHVDHGKT). Position 19–26 (19–26 (GHVDHGKT)) interacts with GTP. Residue Thr26 participates in Mg(2+) binding. A G2 region spans residues 60-64 (GITIN). Residues 81 to 84 (DCPG) form a G3 region. GTP-binding positions include 81-85 (DCPGH) and 136-139 (NKCD). The G4 stretch occupies residues 136–139 (NKCD). Positions 174-176 (SAT) are G5.

It belongs to the TRAFAC class translation factor GTPase superfamily. Classic translation factor GTPase family. EF-Tu/EF-1A subfamily. Monomer.

It localises to the cytoplasm. The enzyme catalyses GTP + H2O = GDP + phosphate + H(+). GTP hydrolase that promotes the GTP-dependent binding of aminoacyl-tRNA to the A-site of ribosomes during protein biosynthesis. This chain is Elongation factor Tu, found in Psychrobacter arcticus (strain DSM 17307 / VKM B-2377 / 273-4).